Reading from the N-terminus, the 155-residue chain is SsrA-binding protein (155 aa).

This sequence belongs to the SmpB family.

It is found in the cytoplasm. Functionally, required for rescue of stalled ribosomes mediated by trans-translation. Binds to transfer-messenger RNA (tmRNA), required for stable association of tmRNA with ribosomes. tmRNA and SmpB together mimic tRNA shape, replacing the anticodon stem-loop with SmpB. tmRNA is encoded by the ssrA gene; the 2 termini fold to resemble tRNA(Ala) and it encodes a 'tag peptide', a short internal open reading frame. During trans-translation Ala-aminoacylated tmRNA acts like a tRNA, entering the A-site of stalled ribosomes, displacing the stalled mRNA. The ribosome then switches to translate the ORF on the tmRNA; the nascent peptide is terminated with the 'tag peptide' encoded by the tmRNA and targeted for degradation. The ribosome is freed to recommence translation, which seems to be the essential function of trans-translation. The protein is SsrA-binding protein of Streptococcus agalactiae serotype Ia (strain ATCC 27591 / A909 / CDC SS700).